The following is a 322-amino-acid chain: Solute carrier family 25 member 16 (322 aa).

Solcar repeat units lie at residues Phe-34–Phe-120, Ser-128–Val-219, and Leu-241–Phe-322.

Belongs to the mitochondrial carrier (TC 2.A.29) family.

The protein resides in the mitochondrion inner membrane. Its function is as follows. May be involved in the transport of coenzyme A in the mitochondrial matrix. Very little is known about the physiological function of this carrier. This is Solute carrier family 25 member 16 from Rattus norvegicus (Rat).